The sequence spans 177 residues: Large ribosomal subunit protein uL6 (177 aa).

Belongs to the universal ribosomal protein uL6 family. As to quaternary structure, part of the 50S ribosomal subunit.

This protein binds to the 23S rRNA, and is important in its secondary structure. It is located near the subunit interface in the base of the L7/L12 stalk, and near the tRNA binding site of the peptidyltransferase center. In Rickettsia bellii (strain OSU 85-389), this protein is Large ribosomal subunit protein uL6.